A 170-amino-acid chain; its full sequence is MNIDRNRLIGSVIFIFILVFIDQWSKYLVVKYISIGTEYLSFFGDFFKIIHVRNTGILFSIGANINSSLKNLFFLVIPIIILVFVFCFILKETNKIARIALILILSGGIGNIIDRLFRPLGVVDFLDVKFFGIFGLQRWPTFNFADSYVVIGITLFIIYDLFAKNKSTDL.

Transmembrane regions (helical) follow at residues 9–29 (IGSV…KYLV), 72–92 (LFFL…ILKE), and 93–113 (TNKI…GNII). Active-site residues include Asp-124 and Asp-146. The helical transmembrane segment at 142 to 162 (FNFADSYVVIGITLFIIYDLF) threads the bilayer.

It belongs to the peptidase A8 family.

The protein localises to the cell inner membrane. It carries out the reaction Release of signal peptides from bacterial membrane prolipoproteins. Hydrolyzes -Xaa-Yaa-Zaa-|-(S,diacylglyceryl)Cys-, in which Xaa is hydrophobic (preferably Leu), and Yaa (Ala or Ser) and Zaa (Gly or Ala) have small, neutral side chains.. It functions in the pathway protein modification; lipoprotein biosynthesis (signal peptide cleavage). In terms of biological role, this protein specifically catalyzes the removal of signal peptides from prolipoproteins. The protein is Lipoprotein signal peptidase of Borrelia hermsii (strain HS1 / DAH).